Here is a 218-residue protein sequence, read N- to C-terminus: Molybdenum cofactor guanylyltransferase (218 aa).

Residues 16 to 18 (LAG), lysine 28, asparagine 56, aspartate 74, and aspartate 109 each bind GTP. Position 109 (aspartate 109) interacts with Mg(2+).

This sequence belongs to the MobA family. As to quaternary structure, monomer. The cofactor is Mg(2+).

The protein localises to the cytoplasm. It catalyses the reaction Mo-molybdopterin + GTP + H(+) = Mo-molybdopterin guanine dinucleotide + diphosphate. Functionally, transfers a GMP moiety from GTP to Mo-molybdopterin (Mo-MPT) cofactor (Moco or molybdenum cofactor) to form Mo-molybdopterin guanine dinucleotide (Mo-MGD) cofactor. The chain is Molybdenum cofactor guanylyltransferase from Rhizobium meliloti (strain 1021) (Ensifer meliloti).